The chain runs to 167 residues: S-ribosylhomocysteine lyase (167 aa).

Fe cation contacts are provided by His-54, His-58, and Cys-128.

It belongs to the LuxS family. In terms of assembly, homodimer. It depends on Fe cation as a cofactor.

It catalyses the reaction S-(5-deoxy-D-ribos-5-yl)-L-homocysteine = (S)-4,5-dihydroxypentane-2,3-dione + L-homocysteine. Its function is as follows. Involved in the synthesis of autoinducer 2 (AI-2) which is secreted by bacteria and is used to communicate both the cell density and the metabolic potential of the environment. The regulation of gene expression in response to changes in cell density is called quorum sensing. Catalyzes the transformation of S-ribosylhomocysteine (RHC) to homocysteine (HC) and 4,5-dihydroxy-2,3-pentadione (DPD). In Haemophilus influenzae (strain 86-028NP), this protein is S-ribosylhomocysteine lyase.